The following is a 39-amino-acid chain: Mu-theraphotoxin-Ae1a (39 aa).

3 disulfides stabilise this stretch: cysteine 7–cysteine 21, cysteine 14–cysteine 26, and cysteine 20–cysteine 33. Phenylalanine 39 is modified (phenylalanine amide).

The protein belongs to the neurotoxin 10 (Hwtx-1) family. 47 subfamily. Expressed by the venom gland.

The protein localises to the secreted. Functionally, insecticidal toxin that acts, at least partially, by inhibiting insect voltage-gated sodium (NaV) channels of several insect species. The toxin binds to the voltage sensor in NaV channel domain II and inhibits channel opening by shifting the threshold for channel activation to more positive voltages. The toxin binding is sensitive to residues in the S1-S2 loop of the domain II voltage sensor. In vivo, the recombinant toxin causes paralysis and/or death to two dipteran species (Lucilia cuprina and Drosophila melanogaster). In contrast, the toxin does not show paralytic or lethal effect on the cotton bollworm Helicoverpa armigera and the triatomine bug Rhodinius prolixus. The sequence is that of Mu-theraphotoxin-Ae1a from Augacephalus ezendami (Mozambique baboon spider).